The primary structure comprises 571 residues: Carboxylesterase 3 (571 aa).

A signal peptide spans 1 to 26 (MERAVRVESGVLVGVVCLLLACPATA). C97 and C124 are joined by a disulfide. N105 carries an N-linked (GlcNAc...) asparagine glycan. The Acyl-ester intermediate role is filled by S229. C281 and C292 are disulfide-bonded. Catalysis depends on charge relay system residues E347 and H460. Residues 568–571 (QEDL) carry the Prevents secretion from ER motif.

Belongs to the type-B carboxylesterase/lipase family. Post-translationally, N-glycosylated. Expressed in liver, colon and small intestine.

It localises to the endoplasmic reticulum lumen. The catalysed reaction is a carboxylic ester + H2O = an alcohol + a carboxylate + H(+). Its function is as follows. Involved in the detoxification of xenobiotics and in the activation of ester and amide prodrugs. Shows low catalytic efficiency for hydrolysis of CPT-11 (7-ethyl-10-[4-(1-piperidino)-1-piperidino]-carbonyloxycamptothecin), a prodrug for camptothecin used in cancer therapeutics. The protein is Carboxylesterase 3 (CES3) of Homo sapiens (Human).